The following is a 224-amino-acid chain: UPF0758 protein CV_3079 (224 aa).

An MPN domain is found at 102 to 224 (ALSSPQQVRD…AESFAERGWL (123 aa)). His-173, His-175, and Asp-186 together coordinate Zn(2+). A JAMM motif motif is present at residues 173-186 (HNHPSGVSEPSSAD).

It belongs to the UPF0758 family.

The sequence is that of UPF0758 protein CV_3079 from Chromobacterium violaceum (strain ATCC 12472 / DSM 30191 / JCM 1249 / CCUG 213 / NBRC 12614 / NCIMB 9131 / NCTC 9757 / MK).